The sequence spans 170 residues: Envelope protein 168 (170 aa).

M1 is a topological domain (intravirion). The chain crosses the membrane as a helical span at residues 2-22 (FYPVVQILIGIILVIILILGF). At 23–170 (YHLKRKPPKK…TVMGIARNVL (148 aa)) the chain is on the virion surface side.

It belongs to the asfivirus envelope protein p22 family.

It localises to the virion membrane. The protein resides in the host cell membrane. The protein is Envelope protein 168 of African swine fever virus (isolate Tick/South Africa/Pretoriuskop Pr4/1996) (ASFV).